Reading from the N-terminus, the 141-residue chain is Protein stum homolog (141 aa).

Position 26 is a phosphoserine (Ser26). Helical transmembrane passes span 51-71 and 87-107; these read FPVA…GTFV and RHVC…ILTA.

The protein belongs to the SPEC3 family. Stum subfamily.

The protein resides in the membrane. This is Protein stum homolog from Homo sapiens (Human).